Consider the following 439-residue polypeptide: C4-dicarboxylate transport protein (439 aa).

The next 9 helical transmembrane spans lie at 9–29 (HLYFQVLTAISIGVAVGYYMP), 45–65 (MIKMIITPIIFCTVVTGIAGM), 80–100 (LYFEAVSTLALAIGLMVINVI), 150–170 (GEILQVLFFAILFGLALSAMG), 186–206 (AFFGVVNIIMKFAPIGAFGAM), 221–241 (LGMLMGSFYLTCLLFIFVVLG), 291–311 (VVGLVIPTGYSFNLDGTSIYL), 334–354 (ILGVLMLTSKGAAGVTGSGFV), and 357–377 (AATFAAIPTIPVAGLALILGI).

The protein belongs to the dicarboxylate/amino acid:cation symporter (DAACS) (TC 2.A.23) family.

Its subcellular location is the cell inner membrane. Responsible for the transport of dicarboxylates such as succinate, fumarate, and malate from the periplasm across the membrane. The polypeptide is C4-dicarboxylate transport protein (Citrifermentans bemidjiense (strain ATCC BAA-1014 / DSM 16622 / JCM 12645 / Bem) (Geobacter bemidjiensis)).